The following is a 275-amino-acid chain: Large ribosomal subunit protein uL2c (275 aa).

Residues 225–249 are disordered; the sequence is PVDHPHGGGEGRAPIGRKKPTTPWG.

It belongs to the universal ribosomal protein uL2 family. In terms of assembly, part of the 50S ribosomal subunit.

It localises to the plastid. The polypeptide is Large ribosomal subunit protein uL2c (rpl2) (Cuscuta reflexa (Southern Asian dodder)).